We begin with the raw amino-acid sequence, 131 residues long: UPF0102 protein H16_A3579 (131 aa).

It belongs to the UPF0102 family.

This chain is UPF0102 protein H16_A3579, found in Cupriavidus necator (strain ATCC 17699 / DSM 428 / KCTC 22496 / NCIMB 10442 / H16 / Stanier 337) (Ralstonia eutropha).